Here is a 271-residue protein sequence, read N- to C-terminus: Acyl-[acyl-carrier-protein]--UDP-N-acetylglucosamine O-acyltransferase (271 aa).

This sequence belongs to the transferase hexapeptide repeat family. LpxA subfamily. Homotrimer.

The protein localises to the cytoplasm. It catalyses the reaction a (3R)-hydroxyacyl-[ACP] + UDP-N-acetyl-alpha-D-glucosamine = a UDP-3-O-[(3R)-3-hydroxyacyl]-N-acetyl-alpha-D-glucosamine + holo-[ACP]. Its pathway is glycolipid biosynthesis; lipid IV(A) biosynthesis; lipid IV(A) from (3R)-3-hydroxytetradecanoyl-[acyl-carrier-protein] and UDP-N-acetyl-alpha-D-glucosamine: step 1/6. In terms of biological role, involved in the biosynthesis of lipid A, a phosphorylated glycolipid that anchors the lipopolysaccharide to the outer membrane of the cell. The protein is Acyl-[acyl-carrier-protein]--UDP-N-acetylglucosamine O-acyltransferase of Agrobacterium fabrum (strain C58 / ATCC 33970) (Agrobacterium tumefaciens (strain C58)).